We begin with the raw amino-acid sequence, 370 residues long: 4-hydroxy-3-methylbut-2-en-1-yl diphosphate synthase (flavodoxin) (370 aa).

[4Fe-4S] cluster is bound by residues Cys270, Cys273, Cys305, and Glu312.

The protein belongs to the IspG family. [4Fe-4S] cluster is required as a cofactor.

It catalyses the reaction (2E)-4-hydroxy-3-methylbut-2-enyl diphosphate + oxidized [flavodoxin] + H2O + 2 H(+) = 2-C-methyl-D-erythritol 2,4-cyclic diphosphate + reduced [flavodoxin]. It participates in isoprenoid biosynthesis; isopentenyl diphosphate biosynthesis via DXP pathway; isopentenyl diphosphate from 1-deoxy-D-xylulose 5-phosphate: step 5/6. Its function is as follows. Converts 2C-methyl-D-erythritol 2,4-cyclodiphosphate (ME-2,4cPP) into 1-hydroxy-2-methyl-2-(E)-butenyl 4-diphosphate. This is 4-hydroxy-3-methylbut-2-en-1-yl diphosphate synthase (flavodoxin) from Azotobacter vinelandii (strain DJ / ATCC BAA-1303).